Here is a 330-residue protein sequence, read N- to C-terminus: Ketol-acid reductoisomerase (NADP(+)) (330 aa).

The KARI N-terminal Rossmann domain maps to 3–184 (LPVYYDKDID…GGGRMGVLKT (182 aa)). Residues 26-29 (YGAQ), serine 52, and serine 54 each bind NADP(+). Residue histidine 109 is part of the active site. Glycine 135 is a binding site for NADP(+). The 145-residue stretch at 185 to 329 (SFKEECESDL…EILRAPFNHK (145 aa)) folds into the KARI C-terminal knotted domain. Residues aspartate 193, glutamate 197, glutamate 229, and glutamate 233 each contribute to the Mg(2+) site. Serine 254 provides a ligand contact to substrate.

This sequence belongs to the ketol-acid reductoisomerase family. The cofactor is Mg(2+).

The catalysed reaction is (2R)-2,3-dihydroxy-3-methylbutanoate + NADP(+) = (2S)-2-acetolactate + NADPH + H(+). It carries out the reaction (2R,3R)-2,3-dihydroxy-3-methylpentanoate + NADP(+) = (S)-2-ethyl-2-hydroxy-3-oxobutanoate + NADPH + H(+). Its pathway is amino-acid biosynthesis; L-isoleucine biosynthesis; L-isoleucine from 2-oxobutanoate: step 2/4. It participates in amino-acid biosynthesis; L-valine biosynthesis; L-valine from pyruvate: step 2/4. In terms of biological role, involved in the biosynthesis of branched-chain amino acids (BCAA). Catalyzes an alkyl-migration followed by a ketol-acid reduction of (S)-2-acetolactate (S2AL) to yield (R)-2,3-dihydroxy-isovalerate. In the isomerase reaction, S2AL is rearranged via a Mg-dependent methyl migration to produce 3-hydroxy-3-methyl-2-ketobutyrate (HMKB). In the reductase reaction, this 2-ketoacid undergoes a metal-dependent reduction by NADPH to yield (R)-2,3-dihydroxy-isovalerate. This is Ketol-acid reductoisomerase (NADP(+)) from Helicobacter pylori (strain HPAG1).